A 173-amino-acid polypeptide reads, in one-letter code: uncharacterized protein (173 aa).

Positions 80–107 (HSATVKRTDSSHRLKSHVVDKRPRRSLD) are disordered. Over residues 85 to 107 (KRTDSSHRLKSHVVDKRPRRSLD) the composition is skewed to basic and acidic residues.

This is an uncharacterized protein from Autographa californica nuclear polyhedrosis virus (AcMNPV).